We begin with the raw amino-acid sequence, 277 residues long: Putative pyruvate, phosphate dikinase regulatory protein (277 aa).

An ADP-binding site is contributed by 156–163 (GVSRTSKT).

The protein belongs to the pyruvate, phosphate/water dikinase regulatory protein family. PDRP subfamily.

It carries out the reaction N(tele)-phospho-L-histidyl/L-threonyl-[pyruvate, phosphate dikinase] + ADP = N(tele)-phospho-L-histidyl/O-phospho-L-threonyl-[pyruvate, phosphate dikinase] + AMP + H(+). The enzyme catalyses N(tele)-phospho-L-histidyl/O-phospho-L-threonyl-[pyruvate, phosphate dikinase] + phosphate + H(+) = N(tele)-phospho-L-histidyl/L-threonyl-[pyruvate, phosphate dikinase] + diphosphate. Bifunctional serine/threonine kinase and phosphorylase involved in the regulation of the pyruvate, phosphate dikinase (PPDK) by catalyzing its phosphorylation/dephosphorylation. In Carboxydothermus hydrogenoformans (strain ATCC BAA-161 / DSM 6008 / Z-2901), this protein is Putative pyruvate, phosphate dikinase regulatory protein.